The sequence spans 308 residues: Acetylglutamate kinase (308 aa).

Substrate contacts are provided by residues 67-68, Arg-89, and Asn-193; that span reads GG.

This sequence belongs to the acetylglutamate kinase family. ArgB subfamily.

It localises to the cytoplasm. It carries out the reaction N-acetyl-L-glutamate + ATP = N-acetyl-L-glutamyl 5-phosphate + ADP. Its pathway is amino-acid biosynthesis; L-arginine biosynthesis; N(2)-acetyl-L-ornithine from L-glutamate: step 2/4. Its function is as follows. Catalyzes the ATP-dependent phosphorylation of N-acetyl-L-glutamate. This is Acetylglutamate kinase from Nitratidesulfovibrio vulgaris (strain DP4) (Desulfovibrio vulgaris).